The primary structure comprises 329 residues: Fructose-1,6-bisphosphatase class 1 (329 aa).

Mg(2+) is bound by residues Glu-84, Asp-103, Leu-105, and Asp-106. Substrate-binding positions include 106-109 (DGSS), Asn-196, and Lys-262. Mg(2+) is bound at residue Glu-268.

The protein belongs to the FBPase class 1 family. Homotetramer. Requires Mg(2+) as cofactor.

The protein localises to the cytoplasm. It carries out the reaction beta-D-fructose 1,6-bisphosphate + H2O = beta-D-fructose 6-phosphate + phosphate. It participates in carbohydrate biosynthesis; gluconeogenesis. In Shewanella loihica (strain ATCC BAA-1088 / PV-4), this protein is Fructose-1,6-bisphosphatase class 1.